Consider the following 1221-residue polypeptide: MTLRLDTSLKRGASRNIPPIPTFSSVSNENLSSSPYTSSSYYSSNCESLDSIGDISIDSSVYSSSEIEFVGNGDKKKNFINNNNNNNGNKYDFSNLLETPKLKFSPSTGRTKNNNNNNNNNINNNNYKKNDNQKKNFKYIEDNESDYLDDENDEENVDIDLSILNVNFKIINENNSQNNNNNKYQINNNMQKTGGRNGSVFFVNNNNNSNNNNNNNNNNNNNNNNNNNNNNNNNNNNDNSNNKNNFKNNNTSYTHNSNKNNNENKNTFAIKQQLVSTPKNKLSQTYREKVILEHLNILIESNKACNFPKLINWYKAAPTSNLSNVNNNNSNNNNNNSNNNITNSRYGSNYEDIYDDNYYDEVDDYDSGKEEEESTKTITKTITTTTASIKPNIQYMHLILEYANMGTLKEYGKDNNFEFTISQMKSLLFQVIYSLAISQKEFEFVHNDLHFGNVLLTSFPVDKKYIVYQDKLDNGEFNNWIVGGDFIVKISDFGLSRIKLPSNEIIYNQRNDRSKEFCFYSDLYSFSSLLNKIKIKESPSSSSTTSTSTSQVLIKSDSDSSSSASSSSSSSSSSSSSSSSSLPKSKNKSNRSKDNQSKLDPEKRLLTKLKKSMKDLPPYKLLDHPFFDSLKVCPNDCLPLNSIRISTNGIVPKEFPKPLSPIFEKNNIISIPSSPISTTTTTFPTTPTIKSTTKKISKTIVIPSSPSLALPPNLSVKSPFAPPSKKQLQQYQQQQKQQTISMFKYDDEEEKEEEEKEKEKEKEKEKEKEEEGEEGNIPKEKLILKMTPKPYIFIHHFSPNSLGPLSPPSSTSSTLLGALSQEKFEKKQRQIQDSEKVNKNEEENQTKDDADNISPPLPHAIKKSIYNNKNNHQKISTNTIIKTPIKAPIKTITQIPTETPNKIPNKTISQSNPVIIRDETPQKGIPFEKKVVSTPLIYKERPHFVFLKKAKLSSNSNNKENIINFHNNNNNNNNNNNNNNNNNNNNNNNNNNNKDSYNEKGNATSYCNGDDDDDDFKIDHKENVVSGFLIEKDHEFIGDKENSKEKQKVSKRVQDKAWQELNAFLRKNPTQGVSRIKSTDYPALSDLFPKKKRCSENNFVFEKEKKQEKENKEKENKEKEKKQLEKQKQLEREKLEKDRLEKDRLEKEQQEKDCLEREKFLENERLEKEQEREKLEKEIKILVVSKKNRTNPLQKDYDRYIKKVGSSLTEKRASKPMNDNI.

3 disordered regions span residues 1-37 (MTLRLDTSLKRGASRNIPPIPTFSSVSNENLSSSPYT), 104-133 (FSPSTGRTKNNNNNNNNNINNNNYKKNDNQ), and 173-263 (ENNS…NNNE). Low complexity-rich tracts occupy residues 24-37 (SSVSNENLSSSPYT), 112-127 (KNNNNNNNNNINNNNY), 173-192 (ENNSQNNNNNKYQINNNMQK), and 204-263 (NNNN…NNNE). The Protein kinase domain maps to 186–627 (INNNMQKTGG…PYKLLDHPFF (442 aa)). Residue 192-200 (KTGGRNGSV) coordinates ATP. Residue Lys-271 coordinates ATP. Residues 324-344 (NVNNNNSNNNNNNSNNNITNS) are compositionally biased toward low complexity. A disordered region spans residues 324–346 (NVNNNNSNNNNNNSNNNITNSRY). Asp-448 functions as the Proton acceptor in the catalytic mechanism. Low complexity-rich tracts occupy residues 538 to 550 (SPSSSSTTSTSTS) and 559 to 584 (DSSSSASSSSSSSSSSSSSSSSSLPK). 5 disordered regions span residues 538–604 (SPSS…PEKR), 712–782 (PNLS…KEKL), 823–858 (KFEKKQRQIQDSEKVNKNEEENQTKDDADNISPPLP), 959–1008 (KENI…SYCN), and 1105–1152 (KKQE…QQEK). A compositionally biased stretch (basic and acidic residues) spans 591 to 604 (RSKDNQSKLDPEKR). Low complexity predominate over residues 725–738 (KKQLQQYQQQQKQQ). Acidic residues predominate over residues 746–756 (DDEEEKEEEEK). Basic and acidic residues-rich tracts occupy residues 757 to 769 (EKEKEKEKEKEKE) and 823 to 850 (KFEKKQRQIQDSEKVNKNEEENQTKDDA). Residues 959-993 (KENIINFHNNNNNNNNNNNNNNNNNNNNNNNNNNN) show a composition bias toward low complexity.

It belongs to the protein kinase superfamily. Ser/Thr protein kinase family.

It carries out the reaction L-seryl-[protein] + ATP = O-phospho-L-seryl-[protein] + ADP + H(+). The catalysed reaction is L-threonyl-[protein] + ATP = O-phospho-L-threonyl-[protein] + ADP + H(+). In Dictyostelium discoideum (Social amoeba), this protein is Probable serine/threonine-protein kinase DDB_G0286465.